The primary structure comprises 169 residues: Putative pre-16S rRNA nuclease (169 aa).

The span at 1 to 19 (MTDSDHRLPDRPGEGDPGR) shows a compositional bias: basic and acidic residues. Positions 1–22 (MTDSDHRLPDRPGEGDPGRGRR) are disordered.

Belongs to the YqgF nuclease family.

Its subcellular location is the cytoplasm. Functionally, could be a nuclease involved in processing of the 5'-end of pre-16S rRNA. The chain is Putative pre-16S rRNA nuclease from Mycobacterium sp. (strain JLS).